The chain runs to 836 residues: Homeobox-leucine zipper protein ATHB-15 (836 aa).

Residues 14–77 (DNGKYVRYTP…NRRCREKQRK (64 aa)) constitute a DNA-binding region (homeobox). Residues 72–115 (REKQRKEASRLQAVNRKLTAMNKLLMEENDRLQKQVSQLVHENS) are a coiled coil. In terms of domain architecture, START spans 151-379 (RDASPAGLLS…IAQEVTQTNS (229 aa)).

It belongs to the HD-ZIP homeobox family. Class III subfamily. In terms of assembly, interacts with ESR1 and ESR2. Interacts with ZPR3. Highly expressed the developing vascular elements and the adaxial portion of cotyledons. Expressed in developing ovules, stamens and carpels. Expressed in procambium and shoot meristem.

It localises to the nucleus. In terms of biological role, probable transcription factor involved in the regulation of meristem development to promote lateral organ formation. May regulates procambial and vascular tissue formation or maintenance, and vascular development in inflorescence stems. This chain is Homeobox-leucine zipper protein ATHB-15 (ATHB-15), found in Arabidopsis thaliana (Mouse-ear cress).